Reading from the N-terminus, the 301-residue chain is Protoheme IX farnesyltransferase (301 aa).

The next 9 membrane-spanning stretches (helical) occupy residues 20-42, 55-75, 105-125, 126-146, 150-172, 176-198, 227-247, 249-269, and 280-300; these read FTEL…GMWL, VDVI…SGAF, ALMV…MTTW, QAGV…SLYA, LVSN…WFAV, FSIV…FYAI, MFFW…LGIV, VILA…GFKM, and FVYS…ISIF.

Belongs to the UbiA prenyltransferase family. Protoheme IX farnesyltransferase subfamily. Interacts with CtaA.

It localises to the cell membrane. It catalyses the reaction heme b + (2E,6E)-farnesyl diphosphate + H2O = Fe(II)-heme o + diphosphate. It participates in porphyrin-containing compound metabolism; heme O biosynthesis; heme O from protoheme: step 1/1. Converts heme B (protoheme IX) to heme O by substitution of the vinyl group on carbon 2 of heme B porphyrin ring with a hydroxyethyl farnesyl side group. The chain is Protoheme IX farnesyltransferase from Listeria monocytogenes serovar 1/2a (strain ATCC BAA-679 / EGD-e).